Consider the following 127-residue polypeptide: Spore germination protein 2 (127 aa).

The first 25 residues, Met1–Ser25, serve as a signal peptide directing secretion. N-linked (GlcNAc...) asparagine glycosylation is found at Asn54 and Asn118.

This sequence belongs to the Dictyostelium gerABC family.

It localises to the secreted. The protein is Spore germination protein 2 (gerB) of Dictyostelium discoideum (Social amoeba).